Reading from the N-terminus, the 110-residue chain is Hydrogenase maturation factor HypA (110 aa).

His-2 contacts Ni(2+). Zn(2+) is bound by residues Cys-70, Cys-73, Cys-86, and Cys-89.

It belongs to the HypA/HybF family.

Functionally, involved in the maturation of [NiFe] hydrogenases. Required for nickel insertion into the metal center of the hydrogenase. This Geobacter sulfurreducens (strain ATCC 51573 / DSM 12127 / PCA) protein is Hydrogenase maturation factor HypA.